The sequence spans 352 residues: UDP-N-acetylglucosamine--N-acetylmuramyl-(pentapeptide) pyrophosphoryl-undecaprenol N-acetylglucosamine transferase (352 aa).

UDP-N-acetyl-alpha-D-glucosamine is bound by residues Ser-195 and Gln-287.

Belongs to the glycosyltransferase 28 family. MurG subfamily.

Its subcellular location is the cell membrane. The enzyme catalyses Mur2Ac(oyl-L-Ala-gamma-D-Glu-L-Lys-D-Ala-D-Ala)-di-trans,octa-cis-undecaprenyl diphosphate + UDP-N-acetyl-alpha-D-glucosamine = beta-D-GlcNAc-(1-&gt;4)-Mur2Ac(oyl-L-Ala-gamma-D-Glu-L-Lys-D-Ala-D-Ala)-di-trans,octa-cis-undecaprenyl diphosphate + UDP + H(+). Its pathway is cell wall biogenesis; peptidoglycan biosynthesis. Cell wall formation. Catalyzes the transfer of a GlcNAc subunit on undecaprenyl-pyrophosphoryl-MurNAc-pentapeptide (lipid intermediate I) to form undecaprenyl-pyrophosphoryl-MurNAc-(pentapeptide)GlcNAc (lipid intermediate II). The sequence is that of UDP-N-acetylglucosamine--N-acetylmuramyl-(pentapeptide) pyrophosphoryl-undecaprenol N-acetylglucosamine transferase from Streptococcus pneumoniae (strain ATCC BAA-255 / R6).